A 365-amino-acid chain; its full sequence is Histidinol-phosphate aminotransferase 2 (365 aa).

The residue at position 221 (Lys-221) is an N6-(pyridoxal phosphate)lysine.

It belongs to the class-II pyridoxal-phosphate-dependent aminotransferase family. Histidinol-phosphate aminotransferase subfamily. As to quaternary structure, homodimer. Requires pyridoxal 5'-phosphate as cofactor.

The enzyme catalyses L-histidinol phosphate + 2-oxoglutarate = 3-(imidazol-4-yl)-2-oxopropyl phosphate + L-glutamate. It participates in amino-acid biosynthesis; L-histidine biosynthesis; L-histidine from 5-phospho-alpha-D-ribose 1-diphosphate: step 7/9. This Bradyrhizobium diazoefficiens (strain JCM 10833 / BCRC 13528 / IAM 13628 / NBRC 14792 / USDA 110) protein is Histidinol-phosphate aminotransferase 2 (hisC2).